We begin with the raw amino-acid sequence, 212 residues long: UPF0111 protein PH1389 (212 aa).

This sequence belongs to the UPF0111 family.

The chain is UPF0111 protein PH1389 from Pyrococcus horikoshii (strain ATCC 700860 / DSM 12428 / JCM 9974 / NBRC 100139 / OT-3).